Reading from the N-terminus, the 294-residue chain is Large ribosomal subunit protein uL18 (294 aa).

The tract at residues 247–275 is disordered; that stretch reads RADPSPSAKKAAKPSKRHTAKRLTYDERK. Residues 256–267 show a composition bias toward basic residues; sequence KAAKPSKRHTAK.

This sequence belongs to the universal ribosomal protein uL18 family. Component of the large ribosomal subunit (LSU).

Its subcellular location is the cytoplasm. It localises to the nucleus. Functionally, component of the ribosome, a large ribonucleoprotein complex responsible for the synthesis of proteins in the cell. The small ribosomal subunit (SSU) binds messenger RNAs (mRNAs) and translates the encoded message by selecting cognate aminoacyl-transfer RNA (tRNA) molecules. The large subunit (LSU) contains the ribosomal catalytic site termed the peptidyl transferase center (PTC), which catalyzes the formation of peptide bonds, thereby polymerizing the amino acids delivered by tRNAs into a polypeptide chain. The nascent polypeptides leave the ribosome through a tunnel in the LSU and interact with protein factors that function in enzymatic processing, targeting, and the membrane insertion of nascent chains at the exit of the ribosomal tunnel. The sequence is that of Large ribosomal subunit protein uL18 (rpl-5) from Caenorhabditis briggsae.